The sequence spans 111 residues: Rubredoxin (111 aa).

Positions 11–62 constitute a Rubredoxin-like domain; that stretch reads LDRFECRSCGYVYEPEKGDNKHDIAPETPFAELPINWRCPVCTAKKAAFTNI. The Fe cation site is built by cysteine 16, cysteine 19, cysteine 49, and cysteine 52.

This sequence belongs to the rubredoxin family. The cofactor is Fe(3+).

Functionally, rubredoxin is a small nonheme, iron protein lacking acid-labile sulfide. Its single Fe, chelated to 4 Cys, functions as an electron acceptor and may also stabilize the conformation of the molecule. Could be involved in hydrogenase-linked redox processes. This is Rubredoxin (rub) from Nostoc sp. (strain PCC 7120 / SAG 25.82 / UTEX 2576).